Consider the following 366-residue polypeptide: Galactoside alpha-(1,2)-fucosyltransferase 1 (366 aa).

Over 1-8 (MWPRSHRH) the chain is Cytoplasmic. The chain crosses the membrane as a helical; Signal-anchor for type II membrane protein span at residues 9–25 (LCLAFLLVCVLSAISFL). The Lumenal portion of the chain corresponds to 26–366 (IHFHQDSIRH…LSPLWPLAEP (341 aa)). N-linked (GlcNAc...) asparagine glycans are attached at residues asparagine 66, asparagine 302, and asparagine 328.

Belongs to the glycosyltransferase 11 family.

It is found in the golgi apparatus. It localises to the golgi stack membrane. The catalysed reaction is a beta-D-galactosyl-(1-&gt;4)-N-acetyl-beta-D-glucosaminyl derivative + GDP-beta-L-fucose = an alpha-L-Fuc-(1-&gt;2)-beta-D-Gal-(1-&gt;4)-beta-D-GlcNAc derivative + GDP + H(+). It catalyses the reaction a ganglioside GA1 + GDP-beta-L-fucose = a ganglioside Fuc-GA1 + GDP + H(+). It carries out the reaction a beta-D-Gal-(1-&gt;3)-beta-D-GlcNAc-(1-&gt;3)-beta-D-Gal-(1-&gt;4)-beta-D-Glc-(1&lt;-&gt;1')-Cer(d18:1(4E)) + GDP-beta-L-fucose = alpha-L-fucosyl-(1-&gt;2)- beta-D-galactosyl-(1-&gt;3)-N-acetyl-beta-D-glucosaminyl-(1-&gt;3)-beta-D-galactosyl-(1-&gt;4)-beta-D-glucosyl-(1&lt;-&gt;1')-N-acylsphing-4-enine + GDP + H(+). The enzyme catalyses a neolactoside nLc4Cer(d18:1(4E)) + GDP-beta-L-fucose = a neolactoside IV(2)-alpha-Fuc-nLc4Cer(d18:1(4E)) + GDP + H(+). The catalysed reaction is a ganglioside GM1 + GDP-beta-L-fucose = a ganglioside Fuc-GM1 + GDP + H(+). It catalyses the reaction beta-D-galactosyl-(1-&gt;3)-N-acetyl-D-galactosamine + GDP-beta-L-fucose = alpha-L-fucosyl-(1-&gt;2)-beta-D-galactosyl-(1-&gt;3)-N-acetyl-D-galactosamine + GDP + H(+). It functions in the pathway protein modification; protein glycosylation. Catalyzes the transfer of L-fucose, from a guanosine diphosphate-beta-L-fucose, to the terminal galactose residue of glycoconjugates through an alpha(1,2) linkage leading to H antigen synthesis that is an intermediate substrate in the synthesis of ABO blood group antigens. H antigen is essential for maturation of the glomerular layer of the main olfactory bulb, in cell migration and early cell-cell contacts during tumor associated angiogenesis. Preferentially fucosylates soluble lactose and to a lesser extent fucosylates glycolipids gangliosides GA1 and GM1a. This is Galactoside alpha-(1,2)-fucosyltransferase 1 from Saimiri sciureus (Common squirrel monkey).